We begin with the raw amino-acid sequence, 219 residues long: Large ribosomal subunit protein uL3 (219 aa).

The protein belongs to the universal ribosomal protein uL3 family. Part of the 50S ribosomal subunit. Forms a cluster with proteins L14 and L19.

In terms of biological role, one of the primary rRNA binding proteins, it binds directly near the 3'-end of the 23S rRNA, where it nucleates assembly of the 50S subunit. This is Large ribosomal subunit protein uL3 from Salinispora tropica (strain ATCC BAA-916 / DSM 44818 / JCM 13857 / NBRC 105044 / CNB-440).